Reading from the N-terminus, the 151-residue chain is UPF0178 protein Caul_3070 (151 aa).

It belongs to the UPF0178 family.

In Caulobacter sp. (strain K31), this protein is UPF0178 protein Caul_3070.